A 233-amino-acid chain; its full sequence is DNA repair protein RecO (233 aa).

It belongs to the RecO family.

Its function is as follows. Involved in DNA repair and RecF pathway recombination. The protein is DNA repair protein RecO of Francisella philomiragia subsp. philomiragia (strain ATCC 25017 / CCUG 19701 / FSC 153 / O#319-036).